A 91-amino-acid polypeptide reads, in one-letter code: Cytochrome c6 (91 aa).

4 residues coordinate heme c: Cys17, Cys20, His21, and Met63.

Belongs to the cytochrome c family. PetJ subfamily. Monomer. Binds 1 heme c group covalently per subunit.

The protein resides in the plastid. It localises to the chloroplast thylakoid lumen. In terms of biological role, functions as an electron carrier between membrane-bound cytochrome b6-f and photosystem I in oxygenic photosynthesis. The polypeptide is Cytochrome c6 (petJ) (Cladophora glomerata).